Here is an 816-residue protein sequence, read N- to C-terminus: MAMWQGAMDNRGFQQGSFNSFQSSSSDEDLMDIPGTAMDFSMRDDVPPLDGEIEEDKSYNGGGLGSSYRMMDFLEEPIPGVGTYDDFNTIDWVREKSRDRDRHREITNKSKESTWALIHSVSDAFSGWLLMLLIGLLSGSLAGLIDISAHWMTDLKEGICTEGLWFNHEHCCWNSKHVTFKDRDKCPEWNSWSQLIISADEGAFAYIVNYFMYVLWALLFAFLAVSLVKVFAPYACGSGIPEIKTILSGFIIRGYLGKWTLIIKTITLVLAVSSGLSLGKEGPLVHVACCCGNILCHCFNKYRKNEAKRREVLSAAAAAGVSVAFGAPIGGVLFSLEEVSYYFPLKTLWRSFFAALVAAFTLRSINPFGNSRLVLFYVEFHTPWHLFELVPFILLGIFGGLWGALFIRTNIAWCRKRKTTQLGKYPVIEVLVVTAITAILAFPNEYTRMSTSELISELFNDCGLLDSSKLCDYENRFNTSKAAELPDRPAGAGVYSAMWQLALTLILKIVITIFTFGMKIPSGLFIPSMAVGAIAGRLLGVGMEQLAYYHHDWAIFNSWCSQGADCITPGLYAMVGAAACLGGVTRMTVSLVVIMFELTGGLEYIVPLMAAAMTSKWVADALGREGIYDAHIRLNGYPFLEAKEEFAHKTLAMDVMKPRRNDPSLTVLTQDSMTVEDVETIISETTYSGFPVVVSRESQRLVGFVLRRDLIISIENARKKQDGVVSTSIIYFTEHSPPMPPYTPPTLKLRNILDLSPFTVTDLTPMEIVVDIFRKLGLRQCLVTHNGRLLGIITKKDVLKHIAQMANQDPDSILFN.

The tract at residues 1-28 is disordered; that stretch reads MAMWQGAMDNRGFQQGSFNSFQSSSSDE. Topologically, residues 1-124 are cytoplasmic; that stretch reads MAMWQGAMDN…WALIHSVSDA (124 aa). Low complexity predominate over residues 12 to 25; sequence GFQQGSFNSFQSSS. Transmembrane regions (helical) follow at residues 125-162 and 208-231; these read FSGWLLMLLIGLLSGSLAGLIDISAHWMTDLKEGICTE and VNYFMYVLWALLFAFLAVSLVKVF. Residues 237-241 carry the Selectivity filter part_1 motif; it reads GSGIP. Serine 238 contributes to the chloride binding site. The helical intramembrane region spans 240–247; the sequence is IPEIKTIL. The next 2 membrane-spanning stretches (helical) occupy residues 256–275 and 281–300; these read LGKWTLIIKTITLVLAVSSG and EGPLVHVACCCGNILCHCFN. Residues 279–283 carry the Selectivity filter part_2 motif; that stretch reads GKEGP. 2 intramembrane regions (helical) span residues 312-324 and 328-336; these read VLSAAAAAGVSVA and PIGGVLFSL. The next 5 helical transmembrane spans lie at 348–366, 389–414, 422–442, 498–518, and 523–542; these read LWRSFFAALVAAFTLRSIN, LVPFILLGIFGGLWGALFIRTNIAWC, LGKYPVIEVLVVTAITAILAF, MWQLALTLILKIVITIFTFGM, and GLFIPSMAVGAIAGRLLGVG. The Selectivity filter part_3 motif lies at 523 to 527; sequence GLFIP. A chloride-binding site is contributed by phenylalanine 525. An intramembrane region (helical) is located at residues 570-584; it reads GLYAMVGAAACLGGV. The segment at residues 585–587 is an intramembrane region (note=Loop between two helices); it reads TRM. An intramembrane region (helical) is located at residues 588-599; sequence TVSLVVIMFELT. An intramembrane region (note=Loop between two helices) is located at residues 600–604; the sequence is GGLEY. The chain crosses the membrane as a helical span at residues 605-622; that stretch reads IVPLMAAAMTSKWVADAL. The Cytoplasmic portion of the chain corresponds to 623–816; the sequence is GREGIYDAHI…NQDPDSILFN (194 aa). Residue tyrosine 628 coordinates chloride. 2 CBS domains span residues 656-720 and 752-812; these read MKPR…ARKK and ILDL…DPDS. ATP is bound by residues threonine 666, 687-689, and 794-797; these read YSG and TKKD.

The protein belongs to the chloride channel (TC 2.A.49) family. ClC-5/CLCN5 subfamily. Interacts with NEDD4 and NEDD4L. Ubiquitinated by NEDD4L in the presence of albumin; which promotes endocytosis and proteasomal degradation.

The protein resides in the golgi apparatus membrane. Its subcellular location is the endosome membrane. It is found in the cell membrane. It catalyses the reaction 2 chloride(in) + H(+)(out) = 2 chloride(out) + H(+)(in). Proton-coupled chloride transporter. Functions as antiport system and exchanges chloride ions against protons. Important for normal acidification of the endosome lumen. May play an important role in renal tubular function. The CLC channel family contains both chloride channels and proton-coupled anion transporters that exchange chloride or another anion for protons. The absence of conserved gating glutamate residues is typical for family members that function as channels. The sequence is that of H(+)/Cl(-) exchange transporter 5 (CLCN5) from Sus scrofa (Pig).